A 453-amino-acid chain; its full sequence is Serine/threonine-protein phosphatase 2A regulatory subunit B'' subunit gamma (453 aa).

2 consecutive EF-hand domains span residues 273-308 (PSAL…TMTN) and 341-376 (KEPA…IQEL). The Ca(2+) site is built by aspartate 286, aspartate 288, asparagine 290, methionine 292, and glutamate 297.

In terms of assembly, interacts with MCM3AP/GANP, PPP5C, and the phosphatase 2A core enzyme composed of the PPP2CA catalytic subunit and the constant regulatory subunit PPP2R1A. Finds in a complex with ABCB1, TFPI2 and PPP2R3C; leading to the dephosphorylation of ABCB1. As to expression, expressed in all tissues tested including heart, brain, spleen, thymus, lung, liver, kidney and testis.

Its subcellular location is the nucleus. The protein localises to the cytoplasm. May regulate MCM3AP phosphorylation through phosphatase recruitment. May act as a negative regulator of ABCB1 expression and function through the dephosphorylation of ABCB1 by TFPI2/PPP2R3C complex. May play a role in the activation-induced cell death of B-cells. The polypeptide is Serine/threonine-protein phosphatase 2A regulatory subunit B'' subunit gamma (Ppp2r3c) (Mus musculus (Mouse)).